A 415-amino-acid chain; its full sequence is Protein ROH1A (415 aa).

The tract at residues 184 to 219 (VSGGGGGGGGGNKTTERSWSFGRRSGGSSAASKGGA) is disordered. Positions 185–195 (SGGGGGGGGGN) are enriched in gly residues. Residues 200–219 (RSWSFGRRSGGSSAASKGGA) show a composition bias toward low complexity. The helical transmembrane segment at 263 to 283 (MFIMSTVMVFVMWVLTAAVPC) threads the bilayer.

It belongs to the ROH1 family. Interacts with EXO70A1 and EXO70C1. Binds to EXO70C2. Mainly expressed in cells expanding in a polar manner such as pollen and root hairs.

The protein resides in the membrane. It is found in the cytoplasm. The protein localises to the cytosol. Its function is as follows. Required for seed coat mucilage deposition. The sequence is that of Protein ROH1A from Arabidopsis thaliana (Mouse-ear cress).